The chain runs to 204 residues: Probable nicotinate-nucleotide adenylyltransferase (204 aa).

The protein belongs to the NadD family.

It catalyses the reaction nicotinate beta-D-ribonucleotide + ATP + H(+) = deamido-NAD(+) + diphosphate. Its pathway is cofactor biosynthesis; NAD(+) biosynthesis; deamido-NAD(+) from nicotinate D-ribonucleotide: step 1/1. Catalyzes the reversible adenylation of nicotinate mononucleotide (NaMN) to nicotinic acid adenine dinucleotide (NaAD). This is Probable nicotinate-nucleotide adenylyltransferase from Dehalococcoides mccartyi (strain CBDB1).